The primary structure comprises 383 residues: L-aspartate/L-glutamate decarboxylase (383 aa).

K232 is modified (N6-(pyridoxal phosphate)lysine).

The protein belongs to the group II decarboxylase family. MfnA subfamily. As to quaternary structure, monomer. Pyridoxal 5'-phosphate serves as cofactor.

The enzyme catalyses L-aspartate + H(+) = beta-alanine + CO2. It catalyses the reaction L-glutamate + H(+) = 4-aminobutanoate + CO2. The catalysed reaction is L-cysteate + H(+) = taurine + CO2. It carries out the reaction 3-sulfino-L-alanine + H(+) = hypotaurine + CO2. Its pathway is cofactor biosynthesis; coenzyme A biosynthesis. Its function is as follows. Catalyzes the decarboxylation of L-aspartate to produce beta-alanine, and the decarboxylation of L-glutamate to produce 4-aminobutanoate. Can also use cysteate and, to a lesser extent, cysteine sulfite (3-sulfino-L-alanine), but not L-tyrosine. Specific activities toward L-aspartate and cysteate are higher than toward L-glutamate. This chain is L-aspartate/L-glutamate decarboxylase, found in Pyrococcus horikoshii (strain ATCC 700860 / DSM 12428 / JCM 9974 / NBRC 100139 / OT-3).